The primary structure comprises 255 residues: 5'-nucleotidase SurE (255 aa).

A divalent metal cation contacts are provided by Asp8, Asp9, Ser39, and Asn91.

Belongs to the SurE nucleotidase family. Requires a divalent metal cation as cofactor.

Its subcellular location is the cytoplasm. It carries out the reaction a ribonucleoside 5'-phosphate + H2O = a ribonucleoside + phosphate. Functionally, nucleotidase that shows phosphatase activity on nucleoside 5'-monophosphates. This chain is 5'-nucleotidase SurE, found in Acinetobacter baylyi (strain ATCC 33305 / BD413 / ADP1).